An 887-amino-acid polypeptide reads, in one-letter code: Chaperone protein ClpB 2 (887 aa).

Residues 6–147 (PTKFTDKAWE…AATVKAIRGA (142 aa)) form the Clp R domain. 2 repeat regions span residues 9–73 (FTDK…ARQQ) and 84–147 (CGRS…IRGA). An NBD1 region spans residues 160 to 342 (AALEKYGRDL…RRFQQVYIGQ (183 aa)). Residue 207 to 214 (GEPGVGKT) coordinates ATP. A linker region spans residues 343-559 (PSVEDTISIL…IAEIVAKWTG (217 aa)). The stretch at 393–535 (IDLVDEAAAK…TEAQLLELQA (143 aa)) forms a coiled coil. The segment at 569–780 (ERQKLLQLEQ…RIDDVILFHG (212 aa)) is NBD2. ATP is bound at residue 619-626 (GPTGVGKT). The interval 781-887 (LGRTELAQIA…TGDRDTVSAS (107 aa)) is C-terminal.

Belongs to the ClpA/ClpB family. Homohexamer. The oligomerization is ATP-dependent.

The protein resides in the cytoplasm. Functionally, part of a stress-induced multi-chaperone system, it is involved in the recovery of the cell from heat-induced damage, in cooperation with DnaK, DnaJ and GrpE. Acts before DnaK, in the processing of protein aggregates. Protein binding stimulates the ATPase activity; ATP hydrolysis unfolds the denatured protein aggregates, which probably helps expose new hydrophobic binding sites on the surface of ClpB-bound aggregates, contributing to the solubilization and refolding of denatured protein aggregates by DnaK. This is Chaperone protein ClpB 2 (clpB2) from Thermosynechococcus vestitus (strain NIES-2133 / IAM M-273 / BP-1).